Here is an 89-residue protein sequence, read N- to C-terminus: MKVSVLITLAVLGVMFVWTSAAEQEDHGSDRRDSPALLKNLLGEEVFQSEERACRELLGGCSKDSDCCAHLECRKKWPYHCVWDWTIGK.

The N-terminal stretch at 1-22 (MKVSVLITLAVLGVMFVWTSAA) is a signal peptide. Residues 23 to 52 (EQEDHGSDRRDSPALLKNLLGEEVFQSEER) constitute a propeptide that is removed on maturation. 3 disulfides stabilise this stretch: Cys54–Cys68, Cys61–Cys73, and Cys67–Cys81. Ile87 is modified (isoleucine amide).

This sequence belongs to the neurotoxin 10 (Hwtx-1) family. 39 (Jztx-34) subfamily. Expressed by the venom gland.

The protein resides in the secreted. Functionally, gating-modifier toxin that inhibits voltage-gated sodium channel Nav by shifting the threshold for channel activation to more positive potentials. This toxin moderately inhibits human Nav1.7/SCN9A (IC(50)=459 nM) and weakly inhibits hNav1.2/SCN2A and hNav1.5/SCN5A (&lt;20% inhibition at 1 uM peptide). Inhibition of Nav1.7 is voltage-dependent, with lower inhibition at more positive test pulses. This chain is Mu-theraphotoxin-Phlo1a, found in Phlogius sp. (Tarantula spider).